An 862-amino-acid chain; its full sequence is Taxadiene synthase (862 aa).

The Mg(2+) site is built by D613, D617, N757, T761, and E765. The DDXXD motif signature appears at 613–617 (DDMAD).

Belongs to the terpene synthase family. It depends on Mg(2+) as a cofactor.

It catalyses the reaction (2E,6E,10E)-geranylgeranyl diphosphate = taxa-4(5),11(12)-diene + diphosphate. It functions in the pathway alkaloid biosynthesis; taxol biosynthesis; taxa-4(20),11-dien-5alpha-ol from geranylgeranyl diphosphate: step 1/2. In terms of biological role, catalyzes the cyclization of the ubiquitous isoprenoid intermediate geranylgeranyl diphosphate to taxa-4,11-diene, the parent olefin with a taxane skeleton. The protein is Taxadiene synthase (TDC1) of Taxus brevifolia (Pacific yew).